A 356-amino-acid polypeptide reads, in one-letter code: tRNA N6-adenosine threonylcarbamoyltransferase (356 aa).

Fe cation-binding residues include His-115 and His-119. Substrate-binding positions include 138-142 (LVSGG), Asp-171, Gly-184, and Asn-283. Asp-311 provides a ligand contact to Fe cation.

This sequence belongs to the KAE1 / TsaD family. The cofactor is Fe(2+).

It is found in the cytoplasm. The enzyme catalyses L-threonylcarbamoyladenylate + adenosine(37) in tRNA = N(6)-L-threonylcarbamoyladenosine(37) in tRNA + AMP + H(+). Its function is as follows. Required for the formation of a threonylcarbamoyl group on adenosine at position 37 (t(6)A37) in tRNAs that read codons beginning with adenine. Is involved in the transfer of the threonylcarbamoyl moiety of threonylcarbamoyl-AMP (TC-AMP) to the N6 group of A37, together with TsaE and TsaB. TsaD likely plays a direct catalytic role in this reaction. The polypeptide is tRNA N6-adenosine threonylcarbamoyltransferase (Prochlorococcus marinus (strain SARG / CCMP1375 / SS120)).